A 429-amino-acid chain; its full sequence is 4-hydroxy-3-methylbut-2-en-1-yl diphosphate synthase (flavodoxin) (429 aa).

[4Fe-4S] cluster-binding residues include Cys-310, Cys-313, Cys-356, and Glu-363.

This sequence belongs to the IspG family. Requires [4Fe-4S] cluster as cofactor.

The enzyme catalyses (2E)-4-hydroxy-3-methylbut-2-enyl diphosphate + oxidized [flavodoxin] + H2O + 2 H(+) = 2-C-methyl-D-erythritol 2,4-cyclic diphosphate + reduced [flavodoxin]. It participates in isoprenoid biosynthesis; isopentenyl diphosphate biosynthesis via DXP pathway; isopentenyl diphosphate from 1-deoxy-D-xylulose 5-phosphate: step 5/6. Converts 2C-methyl-D-erythritol 2,4-cyclodiphosphate (ME-2,4cPP) into 1-hydroxy-2-methyl-2-(E)-butenyl 4-diphosphate. This is 4-hydroxy-3-methylbut-2-en-1-yl diphosphate synthase (flavodoxin) from Bradyrhizobium sp. (strain BTAi1 / ATCC BAA-1182).